We begin with the raw amino-acid sequence, 173 residues long: MEEPQRARSQTVTTTASSFAENFSTTSSSFSYDREFLRTLPGLLIVAEIVLGLLVWTLIAGTEYFRVPAFGWVMFVAVFYWVLTVFFLIIYLTMTYTRIPQVPWTTVGLWFNGSAFALYLSAAIVDASSVSPERDSHNFNSWAASSFFAFLVTICYAGNTYFSFIAWRSRTIQ.

Residues 36–168 (FLRTLPGLLI…NTYFSFIAWR (133 aa)) enclose the MARVEL domain. 4 helical membrane-spanning segments follow: residues 40–60 (LPGL…TLIA), 70–90 (FGWV…FLII), 105–125 (TTVG…AAIV), and 147–167 (FFAF…FIAW).

It belongs to the chemokine-like factor family.

It is found in the membrane. This Bos taurus (Bovine) protein is CKLF-like MARVEL transmembrane domain-containing protein 8 (CMTM8).